A 347-amino-acid polypeptide reads, in one-letter code: NADH-ubiquinone oxidoreductase chain 2 (347 aa).

A run of 10 helical transmembrane segments spans residues 1-21 (MNPL…GIVM), 25-45 (HWLT…PILM), 59-79 (YFLT…INLV), 96-116 (IILT…FWVP), 122-142 (VHLP…MSVL), 148-168 (MINL…GGWG), 200-220 (MALL…LTFM), 240-260 (ITTI…LSGF), 274-294 (NSII…FFYM), and 325-345 (LLSP…MLML).

It belongs to the complex I subunit 2 family. As to quaternary structure, core subunit of respiratory chain NADH dehydrogenase (Complex I) which is composed of 45 different subunits. Interacts with TMEM242.

It is found in the mitochondrion inner membrane. It carries out the reaction a ubiquinone + NADH + 5 H(+)(in) = a ubiquinol + NAD(+) + 4 H(+)(out). Functionally, core subunit of the mitochondrial membrane respiratory chain NADH dehydrogenase (Complex I) which catalyzes electron transfer from NADH through the respiratory chain, using ubiquinone as an electron acceptor. Essential for the catalytic activity and assembly of complex I. The sequence is that of NADH-ubiquinone oxidoreductase chain 2 from Thoopterus nigrescens (Swift fruit bat).